The following is a 174-amino-acid chain: Cytidylate kinase (174 aa).

Residue 7–15 (GLPGTGTTT) coordinates ATP.

It belongs to the cytidylate kinase family. Type 2 subfamily.

Its subcellular location is the cytoplasm. It catalyses the reaction CMP + ATP = CDP + ADP. The catalysed reaction is dCMP + ATP = dCDP + ADP. This chain is Cytidylate kinase, found in Methanococcus vannielii (strain ATCC 35089 / DSM 1224 / JCM 13029 / OCM 148 / SB).